The following is a 952-amino-acid chain: Isoleucine--tRNA ligase (952 aa).

The 'HIGH' region motif lies at 60-70 (PYANGSLHIGH). Residue glutamate 562 participates in L-isoleucyl-5'-AMP binding. The short motif at 603–607 (KMSKS) is the 'KMSKS' region element. Lysine 606 lines the ATP pocket. Positions 921, 924, 941, and 944 each coordinate Zn(2+).

It belongs to the class-I aminoacyl-tRNA synthetase family. IleS type 1 subfamily. As to quaternary structure, monomer. Requires Zn(2+) as cofactor.

It is found in the cytoplasm. The catalysed reaction is tRNA(Ile) + L-isoleucine + ATP = L-isoleucyl-tRNA(Ile) + AMP + diphosphate. Functionally, catalyzes the attachment of isoleucine to tRNA(Ile). As IleRS can inadvertently accommodate and process structurally similar amino acids such as valine, to avoid such errors it has two additional distinct tRNA(Ile)-dependent editing activities. One activity is designated as 'pretransfer' editing and involves the hydrolysis of activated Val-AMP. The other activity is designated 'posttransfer' editing and involves deacylation of mischarged Val-tRNA(Ile). The chain is Isoleucine--tRNA ligase from Microcystis aeruginosa (strain NIES-843 / IAM M-2473).